A 222-amino-acid polypeptide reads, in one-letter code: MKQESAAPNTPPTSQSPTPSAQFPRNDGDPQALWIFGYGSLVWRPDFAYSDSRVGFVRGYSRRFWQGDTFHRGSDKMPGRVVTLLEDHEGCTWGVAYQVQGEQVSKALKYLNVREAVLGGYDTKEVTFYPQDAPDQPLKALAYVATPQNPGYLGPAPEEAIATQILACRGFSGHNLEYLLRLADFMQLCGPQAQDEHLAAIVDAVGTMLPCFCPTEQALALV.

Residues 1–22 (MKQESAAPNTPPTSQSPTPSAQ) show a composition bias toward low complexity. The tract at residues 1 to 24 (MKQESAAPNTPPTSQSPTPSAQFP) is disordered. Residue 35–40 (IFGYGS) participates in substrate binding. Glutamate 115 functions as the Proton acceptor in the catalytic mechanism.

This sequence belongs to the gamma-glutamylcyclotransferase family. ChaC subfamily. As to quaternary structure, interacts with NOTCH1 (via extracellular region).

Its subcellular location is the cytoplasm. The protein localises to the cytosol. It localises to the golgi apparatus. It is found in the trans-Golgi network. The enzyme catalyses glutathione = L-cysteinylglycine + 5-oxo-L-proline. Functionally, catalyzes the cleavage of glutathione into 5-oxo-L-proline and a Cys-Gly dipeptide. Acts specifically on glutathione, but not on other gamma-glutamyl peptides. Glutathione depletion is an important factor for apoptosis initiation and execution. Acts as a pro-apoptotic component of the unfolded protein response pathway by mediating the pro-apoptotic effects of the ATF4-ATF3-DDIT3/CHOP cascade. Negative regulator of Notch signaling pathway involved in embryonic neurogenesis: acts by inhibiting Notch cleavage by furin, maintaining Notch in an immature inactive form, thereby promoting neurogenesis in embryos. This chain is Glutathione-specific gamma-glutamylcyclotransferase 1, found in Homo sapiens (Human).